The chain runs to 642 residues: Threonine--tRNA ligase (642 aa).

In terms of domain architecture, TGS spans 1–61 (MPVITLPDGS…ENDAQLSIIT (61 aa)). The catalytic stretch occupies residues 243–534 (DHRKIGKQLD…LTEEFAGFFP (292 aa)). An N6-acetyllysine modification is found at Lys-286. 3 residues coordinate Zn(2+): Cys-334, His-385, and His-511.

This sequence belongs to the class-II aminoacyl-tRNA synthetase family. Homodimer. The cofactor is Zn(2+).

It is found in the cytoplasm. The catalysed reaction is tRNA(Thr) + L-threonine + ATP = L-threonyl-tRNA(Thr) + AMP + diphosphate + H(+). Its function is as follows. Catalyzes the attachment of threonine to tRNA(Thr) in a two-step reaction: L-threonine is first activated by ATP to form Thr-AMP and then transferred to the acceptor end of tRNA(Thr). Also edits incorrectly charged L-seryl-tRNA(Thr). This Escherichia coli O8 (strain IAI1) protein is Threonine--tRNA ligase.